Here is a 164-residue protein sequence, read N- to C-terminus: Protein LIGHT-DEPENDENT SHORT HYPOCOTYLS 8 (164 aa).

One can recognise an ALOG domain in the interval 23–150 (RYESQKSRDW…ARGVLYKKKK (128 aa)). Positions 148–152 (KKKRL) match the Nuclear localization signal motif.

It belongs to the plant homeotic and developmental regulators ALOG protein family.

The protein localises to the nucleus. Functionally, probable transcription regulator that acts as a developmental regulator by promoting cell growth in response to light. This Arabidopsis thaliana (Mouse-ear cress) protein is Protein LIGHT-DEPENDENT SHORT HYPOCOTYLS 8 (LSH8).